The following is a 335-amino-acid chain: Solute-binding protein Veis_3954 (335 aa).

Positions 1–34 are cleaved as a signal peptide; sequence MPSTRPLPRPSSRSLRRLALGLGLAFGLGATAAA. (R)-pantoate-binding positions include Gln-50, Glu-82, 155-158, Arg-179, and Asn-219; that span reads NGFR.

The protein belongs to the bacterial solute-binding protein 7 family. In terms of assembly, the complex is comprised of an extracytoplasmic solute-binding protein and a heteromeric permease formed by two transmembrane proteins.

The protein resides in the periplasm. Solute-binding protein that binds (R)-pantoate and D-erythronate (in vitro). Probably part of a tripartite ATP-independent periplasmic (TRAP) transport system that mediates solute transport into the cytoplasm. This is Solute-binding protein Veis_3954 from Verminephrobacter eiseniae (strain EF01-2).